Reading from the N-terminus, the 149-residue chain is MRAVVQRVSEAKVIVEEKTVGAIKRGLLVFVGVGKDDTEEDCEWLADKVSGLRIFEDEDGKMNLSVKDINGEVLVVSQFTLYGDCRRGKRPSFTEAAPPDKGKALYERFVELLREKGLKVETGKFRAHMHVHLVNDGPVTILLDSSKLF.

Positions 137–138 (GP) match the Gly-cisPro motif, important for rejection of L-amino acids motif.

It belongs to the DTD family. In terms of assembly, homodimer.

Its subcellular location is the cytoplasm. It carries out the reaction glycyl-tRNA(Ala) + H2O = tRNA(Ala) + glycine + H(+). It catalyses the reaction a D-aminoacyl-tRNA + H2O = a tRNA + a D-alpha-amino acid + H(+). Its function is as follows. An aminoacyl-tRNA editing enzyme that deacylates mischarged D-aminoacyl-tRNAs. Also deacylates mischarged glycyl-tRNA(Ala), protecting cells against glycine mischarging by AlaRS. Acts via tRNA-based rather than protein-based catalysis; rejects L-amino acids rather than detecting D-amino acids in the active site. By recycling D-aminoacyl-tRNA to D-amino acids and free tRNA molecules, this enzyme counteracts the toxicity associated with the formation of D-aminoacyl-tRNA entities in vivo and helps enforce protein L-homochirality. This is D-aminoacyl-tRNA deacylase from Thermotoga petrophila (strain ATCC BAA-488 / DSM 13995 / JCM 10881 / RKU-1).